The following is a 448-amino-acid chain: Signal recognition particle protein (448 aa).

GTP is bound by residues 101–108 (GLQGSGKT), 182–186 (DSAGR), and 240–243 (SKFD).

It belongs to the GTP-binding SRP family. SRP54 subfamily. In terms of assembly, part of the signal recognition particle protein translocation system, which is composed of SRP and FtsY. SRP is a ribonucleoprotein composed of Ffh and a 4.5S RNA molecule.

The protein resides in the cytoplasm. The enzyme catalyses GTP + H2O = GDP + phosphate + H(+). Functionally, involved in targeting and insertion of nascent membrane proteins into the cytoplasmic membrane. Binds to the hydrophobic signal sequence of the ribosome-nascent chain (RNC) as it emerges from the ribosomes. The SRP-RNC complex is then targeted to the cytoplasmic membrane where it interacts with the SRP receptor FtsY. Interaction with FtsY leads to the transfer of the RNC complex to the Sec translocase for insertion into the membrane, the hydrolysis of GTP by both Ffh and FtsY, and the dissociation of the SRP-FtsY complex into the individual components. This is Signal recognition particle protein from Helicobacter pylori (strain J99 / ATCC 700824) (Campylobacter pylori J99).